The following is a 91-amino-acid chain: Potassium channel toxin AaTXK-beta (91 aa).

An N-terminal signal peptide occupies residues 1–19 (MQRNLVVLLFLGMVALSSC). Residues 20 to 27 (GLREKHVQ) constitute a propeptide that is removed on maturation. A BetaSPN-type CS-alpha/beta domain is found at 54–91 (QFGCPAYQGYCDDHCQDIKKEEGFCHGFKCKCGIPMGF). Disulfide bonds link C57–C78, C64–C83, and C68–C85.

Belongs to the long chain scorpion toxin family. Class 1 subfamily. Monomer (both chains). As to expression, expressed by the venom gland.

It is found in the secreted. Functionally, inhibits voltage-gated potassium channels (Kv). Does not activate Kv7 channels. In terms of biological role, peptide activator of Kv7.4/KCNQ4 channels. Also acts as a subtype-selective activator of channels formed by Kv7.3/KCNQ3, Kv7.2/Kv7.3 (KCNQ2/KCNQ3), Kv7.5/Kv7.3 (KCNQ3/KCNQ5) subunits. The chain is Potassium channel toxin AaTXK-beta from Androctonus australis (Sahara scorpion).